The following is a 236-amino-acid chain: UPF0173 metal-dependent hydrolase Mnod_3315 (236 aa).

Belongs to the UPF0173 family.

This Methylobacterium nodulans (strain LMG 21967 / CNCM I-2342 / ORS 2060) protein is UPF0173 metal-dependent hydrolase Mnod_3315.